Here is a 508-residue protein sequence, read N- to C-terminus: UTP--glucose-1-phosphate uridylyltransferase (508 aa).

Ser13 bears the Phosphoserine mark. Residues 113-116 (LNGG), Lys127, Gln190, and Gly222 each bind UTP. 115-116 (GG) provides a ligand contact to substrate. Lys127 lines the Mg(2+) pocket. Residues His223 and 251-253 (NID) each bind substrate. UTP is bound by residues Asp253 and Lys396. Residue Asp253 coordinates Mg(2+). Lys396 is a catalytic residue. Thr426 bears the Phosphothreonine mark. Ser434 carries the phosphoserine modification. Lys438 bears the N6-acetyllysine mark. Residues Ser448 and Ser461 each carry the phosphoserine modification. Positions 457 to 508 (HLTVSGDVTFGKNVSLKGTVIIIANHGDRIDIPPGAVLENKIVSGNLRILDH) are oligomerization. A critical for end-to-end subunit interaction region spans residues 502–503 (NL).

Belongs to the UDPGP type 1 family. As to quaternary structure, homooctamer.

The protein localises to the cytoplasm. It carries out the reaction alpha-D-glucose 1-phosphate + UTP + H(+) = UDP-alpha-D-glucose + diphosphate. It functions in the pathway glycan biosynthesis; glycogen biosynthesis. UTP--glucose-1-phosphate uridylyltransferase catalyzing the conversion of glucose-1-phosphate into UDP-glucose, a crucial precursor for the production of glycogen. This is UTP--glucose-1-phosphate uridylyltransferase (UGP2) from Cricetulus griseus (Chinese hamster).